The sequence spans 552 residues: Putative transport protein HSM_0534 (552 aa).

5 helical membrane passes run 4-24 (IAIT…IGHW), 28-48 (GVGL…HFMN), 67-87 (LILF…ASLL), 95-115 (GLAT…YKVV), and 157-177 (MAYA…MWLI). 2 RCK C-terminal domains span residues 190–275 (KQFQ…VIGE) and 277–360 (IDMP…IIGN). 6 helical membrane passes run 370–390 (MLPV…PFYI), 402–424 (AGGP…LYWF), 438–458 (IVLF…DTLV), 463–483 (LEWM…TGII), 495–515 (LCGL…ANAI), and 529–549 (VYPL…ILLW).

It belongs to the AAE transporter (TC 2.A.81) family. YidE subfamily.

The protein localises to the cell membrane. The protein is Putative transport protein HSM_0534 of Histophilus somni (strain 2336) (Haemophilus somnus).